Consider the following 366-residue polypeptide: tRNA(Met) cytidine acetate ligase (366 aa).

ATP is bound by residues 7-20, glycine 96, asparagine 152, and arginine 175; that span reads IAEF…HKYL.

Belongs to the TmcAL family.

The protein localises to the cytoplasm. The catalysed reaction is cytidine(34) in elongator tRNA(Met) + acetate + ATP = N(4)-acetylcytidine(34) in elongator tRNA(Met) + AMP + diphosphate. Its function is as follows. Catalyzes the formation of N(4)-acetylcytidine (ac(4)C) at the wobble position of elongator tRNA(Met), using acetate and ATP as substrates. First activates an acetate ion to form acetyladenylate (Ac-AMP) and then transfers the acetyl group to tRNA to form ac(4)C34. This chain is tRNA(Met) cytidine acetate ligase, found in Streptococcus mutans serotype c (strain ATCC 700610 / UA159).